We begin with the raw amino-acid sequence, 311 residues long: Dihydroorotate dehydrogenase B (NAD(+)), catalytic subunit (311 aa).

Residues Lys-52, 76-80 (NAMGL), and Asn-133 contribute to the substrate site. 52–53 (KS) contacts FMN. Asn-133 is a binding site for FMN. The active-site Nucleophile is the Cys-136. The FMN site is built by Lys-171 and Ile-197. Position 198 to 199 (198 to 199 (NT)) interacts with substrate. Residues Gly-223, 249–250 (GG), and 271–272 (GS) contribute to the FMN site.

The protein belongs to the dihydroorotate dehydrogenase family. Type 1 subfamily. Heterotetramer of 2 PyrK and 2 PyrD type B subunits. Requires FMN as cofactor.

The protein resides in the cytoplasm. It catalyses the reaction (S)-dihydroorotate + NAD(+) = orotate + NADH + H(+). The protein operates within pyrimidine metabolism; UMP biosynthesis via de novo pathway; orotate from (S)-dihydroorotate (NAD(+) route): step 1/1. Catalyzes the conversion of dihydroorotate to orotate with NAD(+) as electron acceptor. The protein is Dihydroorotate dehydrogenase B (NAD(+)), catalytic subunit (pyrD) of Methanosarcina acetivorans (strain ATCC 35395 / DSM 2834 / JCM 12185 / C2A).